The sequence spans 909 residues: Lon protease homolog 2, peroxisomal (909 aa).

The Lon N-terminal domain occupies 1–230; the sequence is MAPVRAPTAR…KVIELLDRQV (230 aa). The segment at 249 to 269 is disordered; sequence FPMDPDSTKPGKVKPPVKAPG. 463–470 contacts ATP; the sequence is GPPGVGKT. In terms of domain architecture, Lon proteolytic spans 706 to 893; it reads TSRPGIVTGL…WEAIRYVWPD (188 aa). Residues S799 and K842 contribute to the active site. The Microbody targeting signal signature appears at 907–909; sequence SRL.

The protein belongs to the peptidase S16 family.

It localises to the peroxisome matrix. The protein localises to the cytoplasm. It catalyses the reaction Hydrolysis of proteins in presence of ATP.. In terms of biological role, ATP-dependent serine protease that mediates the selective degradation of misfolded and unassembled polypeptides in the peroxisomal matrix. Necessary for type 2 peroxisome targeting signal (PTS2)-containing protein processing and facilitates peroxisome matrix protein import. This chain is Lon protease homolog 2, peroxisomal, found in Sordaria macrospora (strain ATCC MYA-333 / DSM 997 / K(L3346) / K-hell).